A 191-amino-acid polypeptide reads, in one-letter code: Imidazoleglycerol-phosphate dehydratase (191 aa).

This sequence belongs to the imidazoleglycerol-phosphate dehydratase family.

It is found in the cytoplasm. It carries out the reaction D-erythro-1-(imidazol-4-yl)glycerol 3-phosphate = 3-(imidazol-4-yl)-2-oxopropyl phosphate + H2O. It functions in the pathway amino-acid biosynthesis; L-histidine biosynthesis; L-histidine from 5-phospho-alpha-D-ribose 1-diphosphate: step 6/9. The sequence is that of Imidazoleglycerol-phosphate dehydratase from Methanosarcina mazei (strain ATCC BAA-159 / DSM 3647 / Goe1 / Go1 / JCM 11833 / OCM 88) (Methanosarcina frisia).